The chain runs to 261 residues: MTQKERRIFLIEYLLRENPNYHGVQIPDDEDEQKILLRSLMNVRPPQHTSKEFLRIQDNYLQEAIRQHGITGLADLKPVTGRGNGDWYVWRGDITTLKVDAIVNAANSGMTGCWQPCHACIDNCIHTFAGVQLRTVCAGIMQEQGHEEPTGTAKITPAFNLPCKYVLHTVGPIISGQLTDRDCTLLANSYTSCLNLAAENGVKSIAFCCISTGVFRFPAQKAAEIAVATVEDWKAKNNSAMKIVFNVFSEKDEALYNKLMS.

The region spanning 74–261 (ADLKPVTGRG…DEALYNKLMS (188 aa)) is the Macro domain. Residues aspartate 93, isoleucine 94, and asparagine 107 each coordinate ADP-D-ribose. Zn(2+) contacts are provided by cysteine 113, histidine 118, and cysteine 120. ADP-D-ribose-binding residues include cysteine 120, isoleucine 121, aspartate 122, serine 211, threonine 212, glycine 213, and phenylalanine 215.

The protein belongs to the MacroD-type family. Zn-Macro subfamily. Zn(2+) serves as cofactor.

It catalyses the reaction 4-O-(ADP-D-ribosyl)-L-aspartyl-[protein] + H2O = L-aspartyl-[protein] + ADP-D-ribose + H(+). ADP-ribosylhydrolase that specifically reverses the SirTM-mediated mono-ADP-ribosylation at an asparatate residue of GcvH-L, by releasing ADP-ribose from the target protein. May play a role in the regulation of the response to host-induced oxidative stress. The protein is Protein-ADP-ribose hydrolase of Treponema medium.